We begin with the raw amino-acid sequence, 166 residues long: Putative protein PTGES3L (166 aa).

The region spanning 46–154 (RQHARTLWYD…RPPPAMDDLD (109 aa)) is the CS domain. Positions 142-166 (STKRPPPAMDDLDDDSDSADDATSN) are disordered. Over residues 151-166 (DDLDDDSDSADDATSN) the composition is skewed to acidic residues.

It belongs to the p23/wos2 family.

In Homo sapiens (Human), this protein is Putative protein PTGES3L.